The primary structure comprises 279 residues: Protease HtpX homolog (279 aa).

A run of 2 helical transmembrane segments spans residues 6–26 (VFVL…ALGG) and 29–49 (GAIL…WGSS). Residue His-130 participates in Zn(2+) binding. The active site involves Glu-131. His-134 serves as a coordination point for Zn(2+). The next 2 membrane-spanning stretches (helical) occupy residues 145 to 165 (IAAT…FFGG) and 176 to 196 (VAGI…QFAI). Glu-201 serves as a coordination point for Zn(2+).

The protein belongs to the peptidase M48B family. The cofactor is Zn(2+).

It localises to the cell inner membrane. The protein is Protease HtpX homolog of Gemmatimonas aurantiaca (strain DSM 14586 / JCM 11422 / NBRC 100505 / T-27).